The primary structure comprises 100 residues: Urease subunit gamma (100 aa).

This sequence belongs to the urease gamma subunit family. Heterotrimer of UreA (gamma), UreB (beta) and UreC (alpha) subunits. Three heterotrimers associate to form the active enzyme.

Its subcellular location is the cytoplasm. The catalysed reaction is urea + 2 H2O + H(+) = hydrogencarbonate + 2 NH4(+). Its pathway is nitrogen metabolism; urea degradation; CO(2) and NH(3) from urea (urease route): step 1/1. In Pseudarthrobacter chlorophenolicus (strain ATCC 700700 / DSM 12829 / CIP 107037 / JCM 12360 / KCTC 9906 / NCIMB 13794 / A6) (Arthrobacter chlorophenolicus), this protein is Urease subunit gamma.